We begin with the raw amino-acid sequence, 266 residues long: Outer membrane protein OmpK (266 aa).

An N-terminal signal peptide occupies residues 1-20 (MRKSLLALSLLAATSAPVLA).

Belongs to the nucleoside-specific channel-forming outer membrane porin (Tsx) (TC 1.B.10) family.

Its subcellular location is the cell outer membrane. Serves as receptor for a broad-host-range vibriophage, KVP40. The protein is Outer membrane protein OmpK (ompK) of Vibrio parahaemolyticus serotype O3:K6 (strain RIMD 2210633).